The chain runs to 266 residues: Glucosamine-6-phosphate deaminase (266 aa).

Asp72 (proton acceptor; for enolization step) is an active-site residue. The active-site For ring-opening step is the Asp141. His143 serves as the catalytic Proton acceptor; for ring-opening step. Glu148 (for ring-opening step) is an active-site residue.

It belongs to the glucosamine/galactosamine-6-phosphate isomerase family. NagB subfamily. In terms of assembly, homohexamer.

It catalyses the reaction alpha-D-glucosamine 6-phosphate + H2O = beta-D-fructose 6-phosphate + NH4(+). The protein operates within amino-sugar metabolism; N-acetylneuraminate degradation; D-fructose 6-phosphate from N-acetylneuraminate: step 5/5. With respect to regulation, allosterically activated by N-acetylglucosamine 6-phosphate (GlcNAc6P). Catalyzes the reversible isomerization-deamination of glucosamine 6-phosphate (GlcN6P) to form fructose 6-phosphate (Fru6P) and ammonium ion. In Pectobacterium atrosepticum (strain SCRI 1043 / ATCC BAA-672) (Erwinia carotovora subsp. atroseptica), this protein is Glucosamine-6-phosphate deaminase.